The chain runs to 145 residues: Immunoglobulin iota chain (145 aa).

Residues 1 to 19 (MSWAPVLLMLFVYCTGCGP) form the signal peptide. The tract at residues 20–41 (QPVLHQPPAMSSALGTTIRLTC) is framework-1. Positions 20–132 (QPVLHQPPAM…EKEEREREWE (113 aa)) constitute an Ig-like V-type domain. Residues Cys-41 and Cys-115 are joined by a disulfide bond. The complementarity-determining-1 stretch occupies residues 42 to 56 (TLRNDHDIGVYSVYW). The segment at 57-70 (YQQRPGHPPRFLLR) is framework-2. Positions 71-81 (YFSQSDKSQGP) are complementarity-determining-2. The segment at 82-115 (QVPPRFSGSKDVARNRGYLSISELQPEDEAMYYC) is framework-3. Positions 121–130 (SSEKEERERE) are enriched in basic and acidic residues. Positions 121-145 (SSEKEEREREWEEEMEPTAARTRVP) are disordered.

This sequence belongs to the immunoglobulin superfamily. Interacts with IGLL1. Interacts with SYNV1/HRD1 (via N-terminus); this interaction leads to increased VPREB1 ubiquitination and degradation in pre-B cells, possibly through a lysosomal, not proteasomal, pathway. Only expressed by pre-B-cells.

It localises to the endoplasmic reticulum. Associates with the Ig-mu chain to form a molecular complex that is expressed on the surface of pre-B-cells. This complex presumably regulates Ig gene rearrangements in the early steps of B-cell differentiation. The chain is Immunoglobulin iota chain (VPREB1) from Homo sapiens (Human).